The primary structure comprises 261 residues: Shikimate dehydrogenase (NADP(+)) (261 aa).

Residues 13–15 (SLS) and threonine 60 contribute to the shikimate site. Lysine 64 functions as the Proton acceptor in the catalytic mechanism. Glutamate 76 contacts NADP(+). Residues asparagine 85 and aspartate 100 each contribute to the shikimate site. Residues 122–126 (GAGGA), 143–148 (NRTVER), and isoleucine 203 contribute to the NADP(+) site. Residue tyrosine 205 participates in shikimate binding. Glycine 226 provides a ligand contact to NADP(+).

It belongs to the shikimate dehydrogenase family. Homodimer.

The catalysed reaction is shikimate + NADP(+) = 3-dehydroshikimate + NADPH + H(+). It functions in the pathway metabolic intermediate biosynthesis; chorismate biosynthesis; chorismate from D-erythrose 4-phosphate and phosphoenolpyruvate: step 4/7. Functionally, involved in the biosynthesis of the chorismate, which leads to the biosynthesis of aromatic amino acids. Catalyzes the reversible NADPH linked reduction of 3-dehydroshikimate (DHSA) to yield shikimate (SA). The chain is Shikimate dehydrogenase (NADP(+)) from Exiguobacterium sp. (strain ATCC BAA-1283 / AT1b).